We begin with the raw amino-acid sequence, 185 residues long: Lysozyme g (185 aa).

The residue at position 1 (glutamine 1) is a Pyrrolidone carboxylic acid. 2 disulfides stabilise this stretch: cysteine 4/cysteine 60 and cysteine 18/cysteine 29. Catalysis depends on residues glutamate 73 and aspartate 86.

Belongs to the glycosyl hydrolase 23 family.

It localises to the secreted. The enzyme catalyses Hydrolysis of (1-&gt;4)-beta-linkages between N-acetylmuramic acid and N-acetyl-D-glucosamine residues in a peptidoglycan and between N-acetyl-D-glucosamine residues in chitodextrins.. This chain is Lysozyme g, found in Casuarius casuarius (Southern cassowary).